Reading from the N-terminus, the 248-residue chain is Probable transcriptional regulatory protein BH14810 (248 aa).

Belongs to the TACO1 family.

The protein localises to the cytoplasm. In Bartonella henselae (strain ATCC 49882 / DSM 28221 / CCUG 30454 / Houston 1) (Rochalimaea henselae), this protein is Probable transcriptional regulatory protein BH14810.